Consider the following 54-residue polypeptide: Insulin (54 aa).

3 cysteine pairs are disulfide-bonded: cysteine 7–cysteine 39, cysteine 19–cysteine 52, and cysteine 38–cysteine 43.

Belongs to the insulin family. As to quaternary structure, heterodimer of a B chain and an A chain linked by two disulfide bonds.

The protein resides in the secreted. Its function is as follows. Insulin decreases blood glucose concentration. It increases cell permeability to monosaccharides, amino acids and fatty acids. It accelerates glycolysis, the pentose phosphate cycle, and glycogen synthesis in liver. In Squalus acanthias (Spiny dogfish), this protein is Insulin (ins).